We begin with the raw amino-acid sequence, 127 residues long: uncharacterized protein (127 aa).

The signal sequence occupies residues 1–16 (MLKKIIFGITISLTTG). Residue cysteine 17 is the site of N-palmitoyl cysteine attachment. Cysteine 17 is lipidated: S-diacylglycerol cysteine. Residues 56–101 (EVREEIQKYRVEIVDINKKKRELYNRLSKEAQSFLAEQQKYKQKLS) adopt a coiled-coil conformation. The disordered stretch occupies residues 102–127 (IPKLLIENDPKNNTANSKDNNDKDMK).

It localises to the cell membrane. This is an uncharacterized protein from Rickettsia prowazekii (strain Madrid E).